The chain runs to 195 residues: TRVVTCDNGENVQFLICDSGVIFIERALYGRTDGTTCKEGRPANQLTNTQCSQTGTLEVLSHRCNGKQVCEVNTEVFRTSDPCVGIYKYLETTYTCLPATRSITCEGSDAPLECDEGTIQIHSANYGRRDQLVCSFNRPANQLANTNCLSQSITTSKSAERCNRKSQCDVPASNSLYGDPCVGTYKYLDVAYTCG.

SUEL-type lectin domains lie at 1–97 and 104–195; these read TRVV…YTCL and TCEG…YTCG.

Functionally, L-rhamnose binding lectin. Has hemagglutinating activity towards rabbit erythrocytes and human type B erythrocytes. Hemagglutinating activity is inhibited by smooth-type lipopolysaccharide (LPS) from S.flexneri 1A and E.coli K12, but not by rough-type LPS from S.flexneri, E.coli K12 and E.coli EH100. Agglutinates E.coli K12 and B.subtilis. The sequence is that of L-rhamnose-binding lectin CSL2 from Oncorhynchus keta (Chum salmon).